A 204-amino-acid chain; its full sequence is Arginine exporter protein ArgO (204 aa).

Helical transmembrane passes span Met-1–Pro-21, Leu-37–Gly-57, Leu-67–Ala-87, Ile-111–Val-131, Thr-154–Leu-174, and Val-179–Ala-199.

Belongs to the LysE/ArgO transporter (TC 2.A.75) family.

The protein localises to the cell inner membrane. The catalysed reaction is L-arginine(in) = L-arginine(out). Its function is as follows. Involved in the export of arginine. Important to control the intracellular level of arginine and the correct balance between arginine and lysine. The sequence is that of Arginine exporter protein ArgO from Pectobacterium atrosepticum (strain SCRI 1043 / ATCC BAA-672) (Erwinia carotovora subsp. atroseptica).